The sequence spans 394 residues: MSKEKFERSKPHVNVGTIGHVDHGKTTLTAAITTVLAKVYGGAAKDFAAIDNAPEEKERGITISTSHVEYDTPTRHYAHVDCPGHADYVKNMITGAAQMDGAILVVAATDGPMPQTREHILLSRQVGVPFIVVFMNKCDMVDDEELLELVEMEVRELLSEYDFPGDDLPVIQGSALKALEGDEEWSKKIVELADALDNYIPEPERDIDKPFIMPIEDVFSISGRGTVVTGRVERGIVRTGDECEIVGMKDTTKTTVTGVEMFRKLLDEGRAGENIGALLRGTKRDDVERGQVLAKPGTITPHTKFEAEVYVLSKDEGGRHTPFFKGYRPQFYFRTTDVTGAVELPEGVEMVMPGDNLKFVVDLIAPIAMDEGLRFAIREGGRTVGAGVVSKIMD.

The 195-residue stretch at 10-204 (KPHVNVGTIG…ALDNYIPEPE (195 aa)) folds into the tr-type G domain. Residues 19-26 (GHVDHGKT) form a G1 region. 19-26 (GHVDHGKT) is a GTP binding site. Residue threonine 26 coordinates Mg(2+). Residues 60 to 64 (GITIS) form a G2 region. Residues 81 to 84 (DCPG) form a G3 region. GTP-binding positions include 81 to 85 (DCPGH) and 136 to 139 (NKCD). A G4 region spans residues 136–139 (NKCD). Residues 174-176 (SAL) form a G5 region.

The protein belongs to the TRAFAC class translation factor GTPase superfamily. Classic translation factor GTPase family. EF-Tu/EF-1A subfamily. In terms of assembly, monomer.

The protein resides in the cytoplasm. The enzyme catalyses GTP + H2O = GDP + phosphate + H(+). GTP hydrolase that promotes the GTP-dependent binding of aminoacyl-tRNA to the A-site of ribosomes during protein biosynthesis. This chain is Elongation factor Tu, found in Idiomarina loihiensis (strain ATCC BAA-735 / DSM 15497 / L2-TR).